We begin with the raw amino-acid sequence, 561 residues long: Oxygen-dependent choline dehydrogenase (561 aa).

Asp-7–Glu-36 provides a ligand contact to FAD. The Proton acceptor role is filled by His-474.

This sequence belongs to the GMC oxidoreductase family. Requires FAD as cofactor.

It catalyses the reaction choline + A = betaine aldehyde + AH2. It carries out the reaction betaine aldehyde + NAD(+) + H2O = glycine betaine + NADH + 2 H(+). It functions in the pathway amine and polyamine biosynthesis; betaine biosynthesis via choline pathway; betaine aldehyde from choline (cytochrome c reductase route): step 1/1. In terms of biological role, involved in the biosynthesis of the osmoprotectant glycine betaine. Catalyzes the oxidation of choline to betaine aldehyde and betaine aldehyde to glycine betaine at the same rate. The polypeptide is Oxygen-dependent choline dehydrogenase (Paraburkholderia phytofirmans (strain DSM 17436 / LMG 22146 / PsJN) (Burkholderia phytofirmans)).